We begin with the raw amino-acid sequence, 208 residues long: 3-demethoxyubiquinol 3-hydroxylase (208 aa).

Positions 57, 87, 90, 139, 171, and 174 each coordinate Fe cation.

It belongs to the COQ7 family. Fe cation serves as cofactor.

It localises to the cell membrane. It catalyses the reaction a 5-methoxy-2-methyl-3-(all-trans-polyprenyl)benzene-1,4-diol + AH2 + O2 = a 3-demethylubiquinol + A + H2O. It participates in cofactor biosynthesis; ubiquinone biosynthesis. Its function is as follows. Catalyzes the hydroxylation of 2-nonaprenyl-3-methyl-6-methoxy-1,4-benzoquinol during ubiquinone biosynthesis. This is 3-demethoxyubiquinol 3-hydroxylase from Burkholderia mallei (strain NCTC 10229).